The chain runs to 302 residues: UDP-3-O-acyl-N-acetylglucosamine deacetylase (302 aa).

Positions 82, 238, and 242 each coordinate Zn(2+). His-265 acts as the Proton donor in catalysis.

It belongs to the LpxC family. Requires Zn(2+) as cofactor.

It catalyses the reaction a UDP-3-O-[(3R)-3-hydroxyacyl]-N-acetyl-alpha-D-glucosamine + H2O = a UDP-3-O-[(3R)-3-hydroxyacyl]-alpha-D-glucosamine + acetate. Its pathway is glycolipid biosynthesis; lipid IV(A) biosynthesis; lipid IV(A) from (3R)-3-hydroxytetradecanoyl-[acyl-carrier-protein] and UDP-N-acetyl-alpha-D-glucosamine: step 2/6. Catalyzes the hydrolysis of UDP-3-O-myristoyl-N-acetylglucosamine to form UDP-3-O-myristoylglucosamine and acetate, the committed step in lipid A biosynthesis. The sequence is that of UDP-3-O-acyl-N-acetylglucosamine deacetylase from Leptospira biflexa serovar Patoc (strain Patoc 1 / Ames).